The following is a 269-amino-acid chain: Tryptophan synthase alpha chain (269 aa).

Active-site proton acceptor residues include Glu-49 and Asp-60.

The protein belongs to the TrpA family. Tetramer of two alpha and two beta chains.

It catalyses the reaction (1S,2R)-1-C-(indol-3-yl)glycerol 3-phosphate + L-serine = D-glyceraldehyde 3-phosphate + L-tryptophan + H2O. The protein operates within amino-acid biosynthesis; L-tryptophan biosynthesis; L-tryptophan from chorismate: step 5/5. The alpha subunit is responsible for the aldol cleavage of indoleglycerol phosphate to indole and glyceraldehyde 3-phosphate. In Proteus mirabilis (strain HI4320), this protein is Tryptophan synthase alpha chain.